Reading from the N-terminus, the 344-residue chain is MIAVSGGGTGGHFFPALAFTNYVLKKEKVKFIGSKRGIEYELKDLIKTEKLFLDVEPLRERNFYQKLKAIWKFLKAQEEINEFLKEDYRALIFGGYASLPLGINTVLRRKELFIHEQNSIPSKTNKILSKKAKKVLITFNYTKRFFPEGVRVGLPIRKELKKKLPKKEVKKRFGLEPDKITVLIFGGSQGALFLNELARDLKSVLPKEFQVILLTGKIHYEKFKNLEGEKFRVMPFSLDMGLIYSASDVAISRAGAGTINELSHFGVPSVFVPYPYAVDDHQFYNAKEIEKLGGGLVLRQEEAKPDKVLSALKEIVKNLERYSENIKKFFAEGAEERMYEELLG.

Residues 9-11 (TGG), Asn-118, Arg-157, Ser-188, and Gln-282 contribute to the UDP-N-acetyl-alpha-D-glucosamine site.

This sequence belongs to the glycosyltransferase 28 family. MurG subfamily.

It is found in the cell inner membrane. It catalyses the reaction di-trans,octa-cis-undecaprenyl diphospho-N-acetyl-alpha-D-muramoyl-L-alanyl-D-glutamyl-meso-2,6-diaminopimeloyl-D-alanyl-D-alanine + UDP-N-acetyl-alpha-D-glucosamine = di-trans,octa-cis-undecaprenyl diphospho-[N-acetyl-alpha-D-glucosaminyl-(1-&gt;4)]-N-acetyl-alpha-D-muramoyl-L-alanyl-D-glutamyl-meso-2,6-diaminopimeloyl-D-alanyl-D-alanine + UDP + H(+). It participates in cell wall biogenesis; peptidoglycan biosynthesis. Functionally, cell wall formation. Catalyzes the transfer of a GlcNAc subunit on undecaprenyl-pyrophosphoryl-MurNAc-pentapeptide (lipid intermediate I) to form undecaprenyl-pyrophosphoryl-MurNAc-(pentapeptide)GlcNAc (lipid intermediate II). The polypeptide is UDP-N-acetylglucosamine--N-acetylmuramyl-(pentapeptide) pyrophosphoryl-undecaprenol N-acetylglucosamine transferase (Aquifex aeolicus (strain VF5)).